A 735-amino-acid chain; its full sequence is MIP-related peptides (735 aa).

The signal sequence occupies residues 1 to 20 (MCTRPGLAALLVLMTSCASS). Residues 21–135 (FSRADTQSAS…EDSDTKVDTR (115 aa)) constitute a propeptide that is removed on maturation. Positions 33–65 (ALSAASADAQAARQQQEQHLVAQQQQQQQQQQQ) are enriched in low complexity. Disordered regions lie at residues 33-212 (ALSA…FGKK) and 229-251 (FGKKSSGESAGDSGYISVASRGS). Composition is skewed to polar residues over residues 66–76 (HSNNNEPQQRA) and 101–125 (PVSQPDLSPDFSNPMGSSLSQSGTP). Phenylalanine amide is present on residues Phe142, Phe153, and Phe164. A compositionally biased stretch (basic residues) spans 142–159 (FGKKRGQAPRFFGKKRAM). The propeptide occupies 168-184 (SSEFPTSNSEQLALDTR). Phe190 is modified (phenylalanine amide). A propeptide spanning residues 194–203 (SFPESNREQR) is cleaved from the precursor. Positions 194-204 (SFPESNREQRG) are enriched in basic and acidic residues. Phe209 and Phe229 each carry phenylalanine amide. Positions 214-229 (FDENVDIDERAAPRFF) are cleaved as a propeptide — linker peptide. Positions 233–249 (SSGESAGDSGYISVASR) are excised as a propeptide. Phe255 carries the post-translational modification Phenylalanine amide. Residues 259–267 (QDDDIMIAA) constitute a propeptide, linker peptide. Position 274 is a phenylalanine amide (Phe274). A propeptide spans 279–287 (SDDNVALDL) (linker peptide). Phe294 bears the Phenylalanine amide mark. Positions 298 to 311 (QSSDLDDEISVALR) are excised as a propeptide. At Phe317 the chain carries Phenylalanine amide. The propeptide occupies 321 to 332 (RADDEDILLGER). At Phe338 the chain carries Phenylalanine amide. Residues 342 to 353 (RANDENISFSLR) constitute a propeptide that is removed on maturation. 2 disordered regions span residues 352–373 (LRGSPRFFGKKRSDESDDDNIG) and 381–400 (RFFGKKRSDETDDENIGLMA). Phe359 bears the Phenylalanine amide mark. A propeptide spanning residues 363–377 (RSDESDDDNIGLVAR) is cleaved from the precursor. Phenylalanine amide is present on Phe383. The propeptide occupies 387-401 (RSDETDDENIGLMAR). At Phe407 the chain carries Phenylalanine amide. Residues 412 to 426 (SDGLDDGGNIIDVAT) constitute a propeptide, linker peptide. The tract at residues 430 to 464 (PRFFGKKRSNSDSSDKSSDSALSSSESGRQTRQAP) is disordered. At Phe433 the chain carries Phenylalanine amide. Positions 437-461 (RSNSDSSDKSSDSALSSSESGRQTR) are excised as a propeptide. Residues 438–447 (SNSDSSDKSS) show a composition bias toward basic and acidic residues. Pyrrolidone carboxylic acid is present on Gln462. Phe467 is subject to Phenylalanine amide. A propeptide spanning residues 471–493 (YVDEHHVSKRAAATAFPLIIEAR) is cleaved from the precursor. Gln494 is modified (pyrrolidone carboxylic acid). At Phe499 the chain carries Phenylalanine amide. Positions 503 to 509 (EYRYPPR) are excised as a propeptide. The residue at position 515 (Ile515) is an Isoleucine amide. The propeptide occupies 519 to 546 (FSLYRSPGKYSLSSPYMSAKEFKETFRR). Position 552 is a methionine amide (Met552). A propeptide spanning residues 556-585 (TAELNEEGSDDFTNDDTDDENEYDETVLFK) is cleaved from the precursor. Residue Val592 is modified to Valine amide. Leu601 carries the leucine amide modification. Isoleucine amide is present on Ile610. Valine amide is present on Val619. Residue Ile628 is modified to Isoleucine amide. Positions 632 to 661 (DLDWYQKALCAEADILELDDCADFLGNDDV) are cleaved as a propeptide — linker peptide. At Gln664 the chain carries Pyrrolidone carboxylic acid. Isoleucine amide is present on Ile669. The propeptide at 674 to 705 (GEDVSERDYAQLLEALSRLQAIKQIKARIQNE) is linker peptide. Residue Val714 is modified to Valine amide. Positions 715–735 (GRRSEYNLGPFDEFVDESMER) are excised as a propeptide.

Expressed in the CNS and peripheral tissues (the digestive tract, vasculature, and the reproductive organs).

The protein localises to the secreted. Has some structural and functional features similar to vertebrate opioid peptides. AMRPs are inhibitory on Aplysia esophagus, penis retractor muscle, and body wall muscle. This is MIP-related peptides (MRP) from Aplysia californica (California sea hare).